Consider the following 137-residue polypeptide: 14 kDa proline-rich protein DC2.15 (137 aa).

The signal sequence occupies residues 1-25; that stretch reads MGSKNSASVALFFTLNILFFALVSS. The tract at residues 30 to 53 is disordered; it reads PDPYKPKPKPTPKPTPTPYPSAGK. Residues 38 to 48 are compositionally biased toward pro residues; sequence KPTPKPTPTPY. The helical transmembrane segment at 88-104 threads the bilayer; the sequence is LEGLVNLEAAVCLCTAI.

Its subcellular location is the membrane. May be connected with the initiation of embryogenesis or with the metabolic changes produced by the removal of auxins. The chain is 14 kDa proline-rich protein DC2.15 from Daucus carota (Wild carrot).